The sequence spans 748 residues: Catalase-peroxidase (748 aa).

Positions 92 to 238 form a cross-link, tryptophyl-tyrosyl-methioninium (Trp-Tyr) (with M-264); the sequence is WHSAGTYRIG…LAAVQMGLIY (147 aa). His93 serves as the catalytic Proton acceptor. A cross-link (tryptophyl-tyrosyl-methioninium (Tyr-Met) (with W-92)) is located at residues 238–264; that stretch reads YVNPEGPDGNPDPIASARDIRDTFARM. Residue His279 participates in heme b binding.

Belongs to the peroxidase family. Peroxidase/catalase subfamily. Homodimer or homotetramer. The cofactor is heme b. Formation of the three residue Trp-Tyr-Met cross-link is important for the catalase, but not the peroxidase activity of the enzyme.

It carries out the reaction H2O2 + AH2 = A + 2 H2O. The enzyme catalyses 2 H2O2 = O2 + 2 H2O. In terms of biological role, bifunctional enzyme with both catalase and broad-spectrum peroxidase activity. The polypeptide is Catalase-peroxidase (Xanthomonas euvesicatoria pv. vesicatoria (strain 85-10) (Xanthomonas campestris pv. vesicatoria)).